Here is an 87-residue protein sequence, read N- to C-terminus: Small ribosomal subunit protein uS19 (87 aa).

Positions 1-29 (MARSLKKGPFVDHHLQKKVDVQNKEGTKK) are disordered. The span at 9–28 (PFVDHHLQKKVDVQNKEGTK) shows a compositional bias: basic and acidic residues.

This sequence belongs to the universal ribosomal protein uS19 family.

Its function is as follows. Protein S19 forms a complex with S13 that binds strongly to the 16S ribosomal RNA. The polypeptide is Small ribosomal subunit protein uS19 (Protochlamydia amoebophila (strain UWE25)).